We begin with the raw amino-acid sequence, 490 residues long: Betaine aldehyde dehydrogenase (490 aa).

Residues isoleucine 27 and aspartate 93 each coordinate K(+). NAD(+) is bound at residue 150–152 (GAW). Lysine 162 serves as the catalytic Charge relay system. 176–179 (KPSE) provides a ligand contact to NAD(+). Valine 180 contributes to the K(+) binding site. Residue 230–233 (GTDT) coordinates NAD(+). Leucine 246 contacts K(+). Glutamate 252 acts as the Proton acceptor in catalysis. Glycine 254, cysteine 286, and glutamate 387 together coordinate NAD(+). Cysteine 286 functions as the Nucleophile in the catalytic mechanism. Cysteine 286 bears the Cysteine sulfenic acid (-SOH) mark. 2 residues coordinate K(+): lysine 457 and glycine 460. Catalysis depends on glutamate 464, which acts as the Charge relay system.

The protein belongs to the aldehyde dehydrogenase family. In terms of assembly, dimer of dimers. Requires K(+) as cofactor.

The enzyme catalyses betaine aldehyde + NAD(+) + H2O = glycine betaine + NADH + 2 H(+). The protein operates within amine and polyamine biosynthesis; betaine biosynthesis via choline pathway; betaine from betaine aldehyde: step 1/1. Its function is as follows. Involved in the biosynthesis of the osmoprotectant glycine betaine. Catalyzes the irreversible oxidation of betaine aldehyde to the corresponding acid. In Pseudomonas savastanoi pv. phaseolicola (strain 1448A / Race 6) (Pseudomonas syringae pv. phaseolicola (strain 1448A / Race 6)), this protein is Betaine aldehyde dehydrogenase.